We begin with the raw amino-acid sequence, 189 residues long: Batroxicidin (189 aa).

The first 22 residues, 1-22, serve as a signal peptide directing secretion; sequence MQGFFWKTWLVVALCGTSSSLA. Positions 23 to 155 are excised as a propeptide; it reads HRPLSYGEAL…DEEKDRPKRV (133 aa). 2 cysteine pairs are disulfide-bonded: cysteine 79/cysteine 90 and cysteine 101/cysteine 118. Residues 125–148 are compositionally biased toward acidic residues; sequence EEEEEDEEEQKAEVEKDEEKEDEE. The tract at residues 125-152 is disordered; sequence EEEEEDEEEQKAEVEKDEEKEDEEKDRP.

The protein belongs to the cathelicidin family. Expressed by the venom gland.

The protein resides in the secreted. It is found in the target cell membrane. Its function is as follows. Potent antimicrobial peptide against Gram-negative (MIC=0.25 ug/ml against E.coli ATCC 25922, MIC=1 ug/ml against P.aeruginosa) and Gram-positive bacteria (MIC=32 ug/ml against E.faecalis, MIC=32 ug/ml against S.aureus). Adopts an amphipathic alpha helical conformation, that may allow to partition into the target membrane. Low hemolytic activities have been observed on mammalian cells. In addition, when tested in vitro on the parasite Trypanosoma cruzi (responsible of the Chagas disease), is able to reduce the number of the three forms (epimastigote, trypomastigote and amastigote) by inducing cell death through necrosis. The protein is Batroxicidin of Bothrops atrox (Barba amarilla).